We begin with the raw amino-acid sequence, 226 residues long: Ribonuclease 3 (226 aa).

The RNase III domain occupies 6–128 (INRLQRKLGY…LIGGVFLDSN (123 aa)). Residue Glu-41 participates in Mg(2+) binding. Asp-45 is a catalytic residue. Residues Asp-114 and Glu-117 each contribute to the Mg(2+) site. Glu-117 is an active-site residue. Residues 155-225 (DPKTRLQEYL…AEQALKKLEL (71 aa)) form the DRBM domain.

It belongs to the ribonuclease III family. As to quaternary structure, homodimer. It depends on Mg(2+) as a cofactor.

Its subcellular location is the cytoplasm. The enzyme catalyses Endonucleolytic cleavage to 5'-phosphomonoester.. Digests double-stranded RNA. Involved in the processing of primary rRNA transcript to yield the immediate precursors to the large and small rRNAs (23S and 16S). Processes some mRNAs, and tRNAs when they are encoded in the rRNA operon. Processes pre-crRNA and tracrRNA of type II CRISPR loci if present in the organism. This Salmonella typhi protein is Ribonuclease 3.